The following is a 402-amino-acid chain: MDRTETRFRKRGQITGKITTSRQPHPQNEQSPQRSTSGYPLQEVVDDEMLGPSAPGVDPSPPCRSLGWKRKREWSDESEEEPEKELAPEPEETWVVEMLCGLKMKLKQQRVSSILPEHHKDFNSQLAPGVDPSPPHRSFCWKRKMEWWDESEESLEEEPRKVLAPEPEEIWVAEMLCGLKMKLKRRRVSLVLPEHHEAFNRLLEDPVIKRFLAWDKDLRVSDKYLLAMVIAYFSRAGFPSWQYQRIHFFLALYLANDMEEDDEDSKQNIFHFLYRKNRSRIPLLRKPWFQLGHSMNPRARKNRSRIPLLRKRRFQLYRSTNPRARKNRSRIPLLRKRRFQLYRSMNSRARKNRSQIVLFQKRRFHFFCSMSCRAWVSPEELEEIQAYDPEHWVWARDRAHLS.

Positions 1–89 are disordered; it reads MDRTETRFRK…EEPEKELAPE (89 aa). Residues 16-39 are compositionally biased toward polar residues; it reads GKITTSRQPHPQNEQSPQRSTSGY. Residues 76-89 are compositionally biased toward acidic residues; it reads DESEEEPEKELAPE.

It belongs to the Speedy/Ringo family.

This is Speedy protein E2B (SPDYE2B) from Homo sapiens (Human).